The primary structure comprises 433 residues: Trigger factor (433 aa).

A PPIase FKBP-type domain is found at 163 to 248 (GDVVVLDFAA…VHAVKERRLP (86 aa)).

It belongs to the FKBP-type PPIase family. Tig subfamily.

Its subcellular location is the cytoplasm. It catalyses the reaction [protein]-peptidylproline (omega=180) = [protein]-peptidylproline (omega=0). Its function is as follows. Involved in protein export. Acts as a chaperone by maintaining the newly synthesized protein in an open conformation. Functions as a peptidyl-prolyl cis-trans isomerase. The protein is Trigger factor of Nitratidesulfovibrio vulgaris (strain ATCC 29579 / DSM 644 / CCUG 34227 / NCIMB 8303 / VKM B-1760 / Hildenborough) (Desulfovibrio vulgaris).